The sequence spans 406 residues: MSFPVEKVRADFPVLTREVNGLPLAYLDSAASAQKPNQVIDAEMEFYRHGYAAVHRGIHTLSAEATQRMENVRTQVAAFLNARSAEELVFVRGTTEGINLVANSWGNAQVHAGDNIVITQMEHHANIVPWQMLCERSGAQLRVIPLNVDGTLQLEQLDALLDARTRLVAITQISNVLGTANPVAEIIAKAHQAGAKVLVDGAQAVMHHTIDVQALDCDFYVFSGHKLYGPTGIGVLYVKEDILQAMPPWEGGGSMIATVSLTQGTTYAKAPWRFEAGTPNTGGIIGLGAAIDYVSTLGLDAIAEYEASLMRYALAEMASVPDLTLYGPDARKGVIAFNLGKHHAYDVGSFLDNYGVAVRTGHHCAMPLMAFYQVPAMCRASLVMYNTTEEVDRLVTGLKRIHHLLG.

Residue K226 is modified to N6-(pyridoxal phosphate)lysine. Catalysis depends on C364, which acts as the Cysteine persulfide intermediate.

It belongs to the class-V pyridoxal-phosphate-dependent aminotransferase family. Csd subfamily. In terms of assembly, homodimer. Interacts with SufE and the SufBCD complex composed of SufB, SufC and SufD. The interaction with SufE is required to mediate the direct transfer of the sulfur atom from the S-sulfanylcysteine. Pyridoxal 5'-phosphate is required as a cofactor.

The protein resides in the cytoplasm. It catalyses the reaction (sulfur carrier)-H + L-cysteine = (sulfur carrier)-SH + L-alanine. It carries out the reaction L-selenocysteine + AH2 = hydrogenselenide + L-alanine + A + H(+). The protein operates within cofactor biosynthesis; iron-sulfur cluster biosynthesis. Functionally, cysteine desulfurases mobilize the sulfur from L-cysteine to yield L-alanine, an essential step in sulfur metabolism for biosynthesis of a variety of sulfur-containing biomolecules. Component of the suf operon, which is activated and required under specific conditions such as oxidative stress and iron limitation. Acts as a potent selenocysteine lyase in vitro, that mobilizes selenium from L-selenocysteine. Selenocysteine lyase activity is however unsure in vivo. The polypeptide is Cysteine desulfurase (Enterobacter sp. (strain 638)).